We begin with the raw amino-acid sequence, 617 residues long: Acyl-CoA dehydrogenase family member 11 (617 aa).

The segment at 1-47 is disordered; sequence MHRIGNAVRMASSSSANATITARHTQYSHAKTGGFSQTGPTLHNPYK. A compositionally biased stretch (low complexity) spans 11-22; that stretch reads ASSSSANATITA. The segment covering 23–41 has biased composition (polar residues); the sequence is RHTQYSHAKTGGFSQTGPT. FAD is bound by residues 206–215 and 241–243; these read QWMTEKKGGS and FSS. Serine 215 serves as a coordination point for substrate. Substrate is bound by residues serine 267 and arginine 334. FAD-binding positions include arginine 359, 366 to 369, glutamate 437, glycine 441, and 464 to 466; these read QSKW and EGT.

This sequence belongs to the acyl-CoA dehydrogenase family. In terms of assembly, homotetramer; dimer of dimers.

In terms of biological role, promotes adaption to elevated temperatures by regulating expression of the lipid desaturase, fat-7. Binds selectively and with high affinity to fatty acids with chain lengths from C10 to C12 and prevents them from activating fat-7 expression mediated by the nuclear hormone receptor nhr-49, leading to low levels of membrane lipid desaturation and membrane fluidity for adaption to heat. The sequence is that of Acyl-CoA dehydrogenase family member 11 from Caenorhabditis elegans.